The following is a 299-amino-acid chain: ATP phosphoribosyltransferase (299 aa).

This sequence belongs to the ATP phosphoribosyltransferase family. Long subfamily. In terms of assembly, equilibrium between an active dimeric form, an inactive hexameric form and higher aggregates. Interconversion between the various forms is largely reversible and is influenced by the natural substrates and inhibitors of the enzyme. The cofactor is Mg(2+).

The protein localises to the cytoplasm. The catalysed reaction is 1-(5-phospho-beta-D-ribosyl)-ATP + diphosphate = 5-phospho-alpha-D-ribose 1-diphosphate + ATP. The protein operates within amino-acid biosynthesis; L-histidine biosynthesis; L-histidine from 5-phospho-alpha-D-ribose 1-diphosphate: step 1/9. Its activity is regulated as follows. Feedback inhibited by histidine. Functionally, catalyzes the condensation of ATP and 5-phosphoribose 1-diphosphate to form N'-(5'-phosphoribosyl)-ATP (PR-ATP). Has a crucial role in the pathway because the rate of histidine biosynthesis seems to be controlled primarily by regulation of HisG enzymatic activity. This chain is ATP phosphoribosyltransferase, found in Erwinia tasmaniensis (strain DSM 17950 / CFBP 7177 / CIP 109463 / NCPPB 4357 / Et1/99).